The sequence spans 322 residues: tRNA U34 carboxymethyltransferase (322 aa).

Residues Lys-91, Trp-105, Lys-110, Gly-129, 179–180, Met-195, Tyr-199, and Arg-314 contribute to the carboxy-S-adenosyl-L-methionine site; that span reads LE.

The protein belongs to the class I-like SAM-binding methyltransferase superfamily. CmoB family. Homotetramer.

The catalysed reaction is carboxy-S-adenosyl-L-methionine + 5-hydroxyuridine(34) in tRNA = 5-carboxymethoxyuridine(34) in tRNA + S-adenosyl-L-homocysteine + H(+). In terms of biological role, catalyzes carboxymethyl transfer from carboxy-S-adenosyl-L-methionine (Cx-SAM) to 5-hydroxyuridine (ho5U) to form 5-carboxymethoxyuridine (cmo5U) at position 34 in tRNAs. The polypeptide is tRNA U34 carboxymethyltransferase (Pseudomonas aeruginosa (strain ATCC 15692 / DSM 22644 / CIP 104116 / JCM 14847 / LMG 12228 / 1C / PRS 101 / PAO1)).